The following is a 393-amino-acid chain: MNKPDLIEKQNRLAELKENNVSLKSQISGFEVKNAIEDLPKVQELEKTLSENSIEIIKIENELNAQEEKPKGKDKMTNFIESQNAVTEFFDVLKKNSGKSEIKNAWSAKLAENGVTITDTTFQLPRKLVESINTALLNTNPVFKVFHVTNVGALLVSRSFDSANEAQVHKDGQTKTEQAATLTIDTLEPVMVYKLQSLAERVKRLQMSYSELYNLIVAELTQAIVNKIVDLALVEGDGTNGFKSIDKEADVKKIKKITTKAKSAGKTPFADAIEEAVDFVRPTAGRRYLIVKTEDRKALLDELRQATANANVRIKNDDTEIASEVGVDEIIVYTGSKALKPTVLVDQKYHIDMQDLTKVDAFEWKTNSNMILVETLTSGHVETYNAGAVITVS.

Residues 5–69 adopt a coiled-coil conformation; the sequence is DLIEKQNRLA…ENELNAQEEK (65 aa).

This sequence belongs to the Skunalikevirus capsid protein family. Homomultimer. Probably cleaved by the viral protease during maturation.

It is found in the virion. Its function is as follows. Capsid protein self-assembles to form an icosahedral capsid with a T=7 symmetry, about 69 nm in diameter, and consisting of 60 capsid proteins hexamers and 11 pentamers. The capsid encapsulates the genomic DNA. This chain is Capsid protein, found in Lactococcus phage p2 (Lactococcus lactis bacteriophage p2).